The chain runs to 2391 residues: Filaggrin-2 (2391 aa).

The interval 1–81 is S-100-like; it reads MTDLLRSVVT…TEFLLMIFKL (81 aa). 2 consecutive EF-hand domains span residues 8–43 and 49–84; these read VVTV…ELHP and DDPD…LTMA. Positions 62, 64, 66, 68, and 73 each coordinate Ca(2+). 3 disordered regions span residues 96-275, 349-369, and 406-2391; these read ASGS…DSGR, SYSQ…CGGQ, and NSSS…LSRH. Positions 98 to 107 are enriched in basic residues; sequence GSKKHRRGHR. The segment covering 111–121 has biased composition (acidic residues); the sequence is EESETEEDEED. The segment covering 149 to 163 has biased composition (basic residues); that stretch reads GTVKCRHGSNSRRLG. Over residues 166-176 the composition is skewed to polar residues; the sequence is GNLSSSGNQEG. Basic and acidic residues predominate over residues 193 to 209; it reads GKDRHGSSSVELRERIN. The stretch at 245-289 is one Filaggrin 1 repeat; that stretch reads ETSGHESNSTQSRIREQKLGSSCSGSGDSGRRSHACGYSNSSGCG. Composition is skewed to polar residues over residues 420–442 and 449–476; these read GSGS…SSGF and SGQT…SGKT. The Filaggrin 2 repeat unit spans residues 421–466; sequence SGSSQSTSFEQHGTGLSQSSGFEQHVCGSGQTCGQHESTSSQSLGY. The segment covering 480–507 has biased composition (gly residues); it reads GQHGSGSGQSSGFGQCGSGSGQSSGFGQ. Positions 508–562 are enriched in low complexity; that stretch reads HGSVSGQSSGFGQHGSVSGQSSGFGQHESRSRQSSYGQHGSGSSQSSGYGQYGSR. Positions 568-604 are enriched in gly residues; that stretch reads GQHGLGSGQSTGFGQYGSGSGQSSGFGQHGSGSGQSS. A compositionally biased stretch (low complexity) spans 605–655; it reads GFGQHESRSGQSSYGQHSSGSSQSSGYGQHGSRQTSGFGQHGSGSSQSTGF. Over residues 656–666 the composition is skewed to gly residues; that stretch reads GQYGSGSGQSS. A compositionally biased stretch (low complexity) spans 667-734; that stretch reads GFGQHVSGSG…SSGQSSSFGQ (68 aa). Residues 735-756 are compositionally biased toward gly residues; that stretch reads HGSGSGQSSGFGQHGSGSGQSS. The segment covering 757-807 has biased composition (low complexity); that stretch reads GFGQHESRSGQSSYGQHSSGSSQSSGYGQHGSRQTSGFGQHGSGSSQSTGF. Positions 808 to 831 are enriched in gly residues; the sequence is GQYGSGSGQSAGFGQHGSGSGQSS. Positions 832 to 884 are enriched in low complexity; that stretch reads GFGQHESRSHQSSYGQHGSGSSQSSGYGQHGSSSGQTSGFGQHRSSSGQYSGF. Residues 885 to 908 show a composition bias toward gly residues; it reads GQHGSGSGQSSGFGQHGTGSGQYS. Residues 918 to 956 show a composition bias toward low complexity; it reads HQSSYGQHGSGSSQSSGYGQHGSSSGQTFGFGQHRSGSG. Residues 957–972 show a composition bias toward gly residues; it reads QSSGFGQHGSGSGQSS. Composition is skewed to low complexity over residues 973–982 and 994–1027; these read GFGQHESGSG and SSQS…GFGQ. The stretch at 1019–1051 is one Filaggrin 3 repeat; it reads SGQTTGFGQHRSSSGQYSGFGQHGSGSDQSSGF. Residues 1052–1062 show a composition bias toward gly residues; it reads GQHGTGSGQSS. The segment covering 1063–1098 has biased composition (low complexity); sequence GFGQYESRSRQSSYGQHGSGSSQSSGYGQHGSNSGQ. The stretch at 1097–1141 is one Filaggrin 4 repeat; that stretch reads GQTSGFGQHRPGSGQSSGFGQYGSGSGQSSGFGQHGSGTGKSSGF. Over residues 1111-1137 the composition is skewed to gly residues; it reads QSSGFGQYGSGSGQSSGFGQHGSGTGK. The segment covering 1148–1174 has biased composition (low complexity); that stretch reads SGQSSYGQHGTGSSQSSGCGQHESGSG. Polar residues predominate over residues 1175–1198; the sequence is PTTSFGQHVSGSDNFSSSGQHISD. Residues 1206-1220 show a composition bias toward gly residues; that stretch reads GQYGSGSGQSTGLGQ. Positions 1226–1249 are enriched in polar residues; it reads VESGSTVHGRQETTHGQTINTTRH. The span at 1250–1263 shows a compositional bias: low complexity; it reads SQSGQGQSTQTGSR. Position 1276 is a phosphoserine (serine 1276). The segment covering 1329 to 1343 has biased composition (polar residues); that stretch reads HGQSTQTGSRTSGRQ. Residues 1346-1355 show a composition bias toward basic and acidic residues; that stretch reads SHSDATDSEV. Polar residues predominate over residues 1366 to 1377; it reads QEQTHSQAGSQH. Residues 1378-1390 show a composition bias toward basic and acidic residues; sequence GESESTVHERHET. The span at 1406 to 1416 shows a compositional bias: low complexity; that stretch reads HGQSTQRGSRT. Residues serine 1427 and serine 1428 each carry the phosphoserine modification. Over residues 1439–1459 the composition is skewed to polar residues; sequence RPQSQEQTHGQAGSQHGESGS. A Filaggrin 5 repeat occupies 1455–1510; that stretch reads GESGSTVHGRHGTTHGQTGDTTRHAHYHHGKSTQRGSSTTGRRGSGHSESSDSEVH. Low complexity predominate over residues 1487-1496; it reads TQRGSSTTGR. Serine 1504 and serine 1505 each carry phosphoserine. The span at 1510 to 1529 shows a compositional bias: low complexity; the sequence is HSGGSHTHSGHTHGQSGSQH. Residues 1544–1559 show a composition bias toward polar residues; the sequence is HGQTGDTTRHSYSGHE. The segment covering 1560 to 1572 has biased composition (low complexity); it reads QTTQTGSRTTGRQ. Basic and acidic residues-rich tracts occupy residues 1575–1584 and 1605–1618; these read SHSESTDSEV and QHEE…ERHG. Serine 1579 carries the post-translational modification Phosphoserine. Residues 1607 to 1662 form a Filaggrin 6 repeat; sequence EEPEFTVHERHGTTHGQIGDTTGHSHSGHGQSTQRGSRTTGRQRSSHSESSDSEVH. Residues 1627 to 1649 are compositionally biased toward low complexity; that stretch reads TTGHSHSGHGQSTQRGSRTTGRQ. Residues 1652–1661 are compositionally biased toward basic and acidic residues; sequence SHSESSDSEV. Residues serine 1656 and serine 1657 each carry the phosphoserine modification. Composition is skewed to low complexity over residues 1662 to 1686 and 1711 to 1720; these read HSGV…QSES and GLTTQTGSRT. Over residues 1755 to 1768 the composition is skewed to basic and acidic residues; that stretch reads QHGESESIVHERHG. A Filaggrin 7 repeat occupies 1757-1812; the sequence is GESESIVHERHGTIHGQTGDTTRHAHSGHGQSTQTGSRTTGRRSSGHSEYSDSEGH. Over residues 1784-1795 the composition is skewed to low complexity; it reads GHGQSTQTGSRT. Phosphoserine is present on residues serine 1800 and serine 1807. Over residues 1834 to 1845 the composition is skewed to basic and acidic residues; sequence GESESIVDERHG. Residues 1849-1873 show a composition bias toward low complexity; the sequence is GQTGDTSGHSQSGHGQSTQSGSSTT. Residues 1879–1888 show a composition bias toward basic and acidic residues; the sequence is GHSESSDSEV. Serine 1883, serine 1884, and serine 1959 each carry phosphoserine. 2 Filaggrin repeats span residues 1928–1964 and 1984–2039; these read DTTE…SEGP and PESG…SEGH. 2 stretches are compositionally biased toward low complexity: residues 1963 to 1982 and 2013 to 2022; these read GPSG…AGSH and GQSTQRGSRT. At serine 2034 the chain carries Phosphoserine. Low complexity-rich tracts occupy residues 2039-2059, 2114-2125, and 2162-2176; these read HSGV…SQHG, HSGVSHTHSGHT, and HGQS…TGRQ. The stretch at 2134-2189 is one Filaggrin 10 repeat; it reads GESGSAIHGRQGTIHGQTGDTTRHGQSGHGQSTQTGSRTTGRQRSSHSESSDSEVH. Basic and acidic residues predominate over residues 2179–2190; it reads SHSESSDSEVHS. Composition is skewed to low complexity over residues 2201 to 2211, 2219 to 2228, and 2238 to 2247; these read HSQAGSRHGQS, QGTTHGQTGD, and GQSTQRGSRT. A compositionally biased stretch (polar residues) spans 2273-2288; the sequence is GHIQGQAGSQQRQPGS. Positions 2320–2331 are enriched in low complexity; sequence SRSSRASHFQSH. Residues 2367 to 2391 are compositionally biased toward polar residues; that stretch reads SRKSISNSHLSWSTDSTANKQLSRH.

It belongs to the S100-fused protein family. The protein in the N-terminal section; belongs to the S-100 family. Post-translationally, deiminated by PADI1, PADI2 or PADI3 in vitro. The deiminated form is degraded by calpain-1/CAPN1 more quickly and into shorter peptides than the intact protein. In terms of processing, may be processed by calpain-1/CAPN1 in the uppermost epidermal layers. Expressed in skin, thymus, stomach and placenta, but not detected in heart, brain, liver, lung, bone marrow, small intestine, spleen, prostate, colon, adrenal gland, kidney, pancreas, mammary gland, bladder, thyroid, salivary gland and trachea. Weakly expressed in esophagus, tonsils and testis (at protein level). In the skin, strongly expressed in the upper stratum granulosum and lower stratum corneum, but not detected in the upper stratum corneum (at protein level). In scalp hair follicles, mainly restricted within the granular and cornified cells surrounding the infundibular outer root sheath, with weak expression in central and proximal outer root sheath (at protein level). Tends to be down-regulated in sporiatic lesions compared to non-lesional skin inthe same patients.

Its subcellular location is the cytoplasm. It is found in the cytoplasmic granule. Functionally, essential for normal cell-cell adhesion in the cornified cell layers. Important for proper integrity and mechanical strength of the stratum corneum of the epidermis. The protein is Filaggrin-2 (FLG2) of Homo sapiens (Human).